A 360-amino-acid polypeptide reads, in one-letter code: DNA replication and repair protein RecF (360 aa).

ATP is bound at residue 33–40 (GENGSGKT).

Belongs to the RecF family.

It localises to the cytoplasm. Its function is as follows. The RecF protein is involved in DNA metabolism; it is required for DNA replication and normal SOS inducibility. RecF binds preferentially to single-stranded, linear DNA. It also seems to bind ATP. The sequence is that of DNA replication and repair protein RecF from Rickettsia canadensis (strain McKiel).